A 323-amino-acid chain; its full sequence is Melanocortin receptor 3 (323 aa).

Residues 1–37 (MNSSCCPSSSYPTLPNLSQHPAAPSASNRSGSGFCEQ) lie on the Extracellular side of the membrane. N2, N16, and N28 each carry an N-linked (GlcNAc...) asparagine glycan. The chain crosses the membrane as a helical span at residues 38-63 (VFIKPEVFLALGIVSLMENILVILAV). Residues 64–75 (VRNGNLHSPMYF) are Cytoplasmic-facing. A helical membrane pass occupies residues 76-100 (FLCSLAAADMLVSLSNSLETIMIVV). Residues 101–118 (INSDSLTLEDQFIQHMDN) lie on the Extracellular side of the membrane. Residues 119 to 140 (IFDSMICISLVASICNLLAIAV) traverse the membrane as a helical segment. Topologically, residues 141 to 160 (DRYVTIFYALRYHSIMTVRK) are cytoplasmic. Residues 161–181 (ALSLIVAIWVCCGICGVMFIV) traverse the membrane as a helical segment. The Extracellular portion of the chain corresponds to 182-186 (YSESK). The chain crosses the membrane as a helical span at residues 187–210 (MVIVCLITMFFAMVLLMGTLYIHM). Topologically, residues 211-245 (FLFARLHVQRIAALPPADGVAPQQHSCMKGAVTIT) are cytoplasmic. The helical transmembrane segment at 246–268 (ILLGVFIFCWAPFFLHLVLIITC) threads the bilayer. At 269–277 (PTNPYCICY) the chain is on the extracellular side. The chain crosses the membrane as a helical span at residues 278–301 (TAHFNTYLVLIMCNSVIDPLIYAF). Residues 302–323 (RSLELRNTFKEILCGCNGMNVG) are Cytoplasmic-facing. C315 carries S-palmitoyl cysteine lipidation.

This sequence belongs to the G-protein coupled receptor 1 family. In terms of tissue distribution, brain.

Its subcellular location is the cell membrane. Functionally, receptor for MSH (alpha, beta and gamma) and ACTH. This receptor is mediated by G proteins which activate adenylate cyclase. Required for expression of anticipatory patterns of activity and wakefulness during periods of limited nutrient availability and for the normal regulation of circadian clock activity in the brain. The polypeptide is Melanocortin receptor 3 (Mc3r) (Rattus norvegicus (Rat)).